The chain runs to 511 residues: HDIDKNKQETRPMKRNAVLVDGVVLNGPIIDSSSGEKFVEDVYRILMNELVYKASDINQKVCEWQEPEQLKKLLDLNIKDNGEPHEKLLQLCKNVIKYSVKTSHPRFFNQLYAGMDHYSLAARFITEALNPSVYTYEVSPVFILTEEAILKKMIEFLGWKEGDGIFSPGGSVSNMYAVNLARYKYCPDIKQKGLSSAPRLVMFTSEECHYSMKKAAAFLGIGTENVYFVKTDDRGKMIPEELENQIQRAKKEGAVPFLVSATSGTTVLGAFDPLDDIANICEKHKLWFHVDASWGGSALMSQKYRKRLHGIHRADSVAWNPHKMLMAGIQCCALLVRDNSGLLKRCHSAEATYLFQQDKFYDVQYDTGDKSIQCSRRADAFKFWMMWKALGTTGLEERINRALALTRYLASEIKKRDGFELLWEPEYANTCFWYIPPSFRNMEKGPEYWRKFSNVAPTIKERMMKKGSMMVGYQPHRDKVNFFRHIVISPQVSREDMDFVLDEIERLGRDL.

Lys-323 bears the N6-(pyridoxal phosphate)lysine mark.

Belongs to the group II decarboxylase family. Homodimer. The cofactor is pyridoxal 5'-phosphate.

It catalyses the reaction L-aspartate + H(+) = beta-alanine + CO2. It carries out the reaction 3-sulfino-L-alanine + H(+) = hypotaurine + CO2. Catalyzes the decarboxylation of L-aspartate, 3-sulfino-L-alanine (cysteine sulfinic acid), and L-cysteate to beta-alanine, hypotaurine and taurine, respectively. The preferred substrate is L-aspartate. Does not exhibit any decarboxylation activity toward glutamate. The protein is Acidic amino acid decarboxylase GADL1 (gadl1) of Xenopus tropicalis (Western clawed frog).